We begin with the raw amino-acid sequence, 296 residues long: MPNLKDLKNRIASVKSTRKITKAMQMVAAAKLRRAQEAAEMARPYAEKMEAVMSGLASAVGNSEGAPRLLAGNGKDQVHLLVVMTAERGLCGGFNSTIVRKARVHAQKLLGEGKTIKILTVGKKGREQLRRDYADHLIGHVDLSDVKRLGYADAASIATDVLNRFEEDEFDVATIFFNRFESVISQIPTATQIIPAVFEDVEEADDTSKDSGTLYEYEPSEEAVLEDLLPRGIATQIFTALLENGASEQGARMSAMDNATRNAGDMIDRLTIEYNRSRQAVITSELIEIISGAEAL.

Belongs to the ATPase gamma chain family. As to quaternary structure, F-type ATPases have 2 components, CF(1) - the catalytic core - and CF(0) - the membrane proton channel. CF(1) has five subunits: alpha(3), beta(3), gamma(1), delta(1), epsilon(1). CF(0) has three main subunits: a, b and c.

It is found in the cell inner membrane. Its function is as follows. Produces ATP from ADP in the presence of a proton gradient across the membrane. The gamma chain is believed to be important in regulating ATPase activity and the flow of protons through the CF(0) complex. This Jannaschia sp. (strain CCS1) protein is ATP synthase gamma chain.